The following is a 90-amino-acid chain: uncharacterized protein (90 aa).

The tract at residues 62-90 (RQLKKKQAYKPDPEASFSWSANTSTRGRR) is disordered. Residues 78–90 (FSWSANTSTRGRR) show a composition bias toward polar residues.

This is an uncharacterized protein from Escherichia coli (strain K12).